The sequence spans 305 residues: 4-diphosphocytidyl-2-C-methyl-D-erythritol kinase (305 aa).

Lys-17 is a catalytic residue. 111 to 121 (PVASGIGGGSA) lines the ATP pocket. Residue Asp-154 is part of the active site.

This sequence belongs to the GHMP kinase family. IspE subfamily.

The enzyme catalyses 4-CDP-2-C-methyl-D-erythritol + ATP = 4-CDP-2-C-methyl-D-erythritol 2-phosphate + ADP + H(+). It functions in the pathway isoprenoid biosynthesis; isopentenyl diphosphate biosynthesis via DXP pathway; isopentenyl diphosphate from 1-deoxy-D-xylulose 5-phosphate: step 3/6. In terms of biological role, catalyzes the phosphorylation of the position 2 hydroxy group of 4-diphosphocytidyl-2C-methyl-D-erythritol. The chain is 4-diphosphocytidyl-2-C-methyl-D-erythritol kinase from Gluconacetobacter diazotrophicus (strain ATCC 49037 / DSM 5601 / CCUG 37298 / CIP 103539 / LMG 7603 / PAl5).